The sequence spans 426 residues: Glutamate-1-semialdehyde 2,1-aminomutase (426 aa).

Lys-263 is modified (N6-(pyridoxal phosphate)lysine).

Belongs to the class-III pyridoxal-phosphate-dependent aminotransferase family. HemL subfamily. In terms of assembly, homodimer. Pyridoxal 5'-phosphate is required as a cofactor.

It localises to the cytoplasm. It catalyses the reaction (S)-4-amino-5-oxopentanoate = 5-aminolevulinate. The protein operates within porphyrin-containing compound metabolism; protoporphyrin-IX biosynthesis; 5-aminolevulinate from L-glutamyl-tRNA(Glu): step 2/2. This is Glutamate-1-semialdehyde 2,1-aminomutase from Caldicellulosiruptor bescii (strain ATCC BAA-1888 / DSM 6725 / KCTC 15123 / Z-1320) (Anaerocellum thermophilum).